The sequence spans 245 residues: tRNA pseudouridine synthase A (245 aa).

The Nucleophile role is filled by aspartate 52. Position 111 (tyrosine 111) interacts with substrate.

The protein belongs to the tRNA pseudouridine synthase TruA family. As to quaternary structure, homodimer.

It carries out the reaction uridine(38/39/40) in tRNA = pseudouridine(38/39/40) in tRNA. Functionally, formation of pseudouridine at positions 38, 39 and 40 in the anticodon stem and loop of transfer RNAs. This is tRNA pseudouridine synthase A from Rickettsia prowazekii (strain Madrid E).